The following is a 332-amino-acid chain: Ribosomal RNA small subunit methyltransferase C (332 aa).

The protein belongs to the methyltransferase superfamily. RsmC family. Monomer.

It localises to the cytoplasm. It carries out the reaction guanosine(1207) in 16S rRNA + S-adenosyl-L-methionine = N(2)-methylguanosine(1207) in 16S rRNA + S-adenosyl-L-homocysteine + H(+). Its function is as follows. Specifically methylates the guanine in position 1207 of 16S rRNA in the 30S particle. The polypeptide is Ribosomal RNA small subunit methyltransferase C (Pseudomonas putida (strain ATCC 700007 / DSM 6899 / JCM 31910 / BCRC 17059 / LMG 24140 / F1)).